The following is a 473-amino-acid chain: Photosystem II CP43 reaction center protein (473 aa).

Residues 1–14 constitute a propeptide that is removed on maturation; that stretch reads MKTLYSLRRFYPVE. Threonine 15 is subject to N-acetylthreonine. Residue threonine 15 is modified to Phosphothreonine. A run of 5 helical transmembrane segments spans residues 69–93, 134–155, 178–200, 255–275, and 291–312; these read LFEVAHFVPEKPMYEQGLILLPHLA, LLGPETLEESFPFFGYVWKDRN, KALYFGGVYDTWAPGGGDVRKIT, KPFAWARRAFVWSGEAYLSYS, and WFNNTAYPSEFYGPTGPEASQA. Position 367 (glutamate 367) interacts with [CaMn4O5] cluster. The chain crosses the membrane as a helical span at residues 447 to 471; it reads RARAAAAGFEKGIDRDLEPVLSMTP.

It belongs to the PsbB/PsbC family. PsbC subfamily. In terms of assembly, PSII is composed of 1 copy each of membrane proteins PsbA, PsbB, PsbC, PsbD, PsbE, PsbF, PsbH, PsbI, PsbJ, PsbK, PsbL, PsbM, PsbT, PsbX, PsbY, PsbZ, Psb30/Ycf12, at least 3 peripheral proteins of the oxygen-evolving complex and a large number of cofactors. It forms dimeric complexes. Binds multiple chlorophylls and provides some of the ligands for the Ca-4Mn-5O cluster of the oxygen-evolving complex. It may also provide a ligand for a Cl- that is required for oxygen evolution. PSII binds additional chlorophylls, carotenoids and specific lipids. is required as a cofactor.

The protein localises to the plastid. It localises to the chloroplast thylakoid membrane. One of the components of the core complex of photosystem II (PSII). It binds chlorophyll and helps catalyze the primary light-induced photochemical processes of PSII. PSII is a light-driven water:plastoquinone oxidoreductase, using light energy to abstract electrons from H(2)O, generating O(2) and a proton gradient subsequently used for ATP formation. The protein is Photosystem II CP43 reaction center protein of Dioscorea elephantipes (Elephant's foot yam).